The sequence spans 161 residues: uncharacterized protein (161 aa).

This is an uncharacterized protein from Encephalitozoon cuniculi (strain GB-M1) (Microsporidian parasite).